The chain runs to 87 residues: Large ribosomal subunit protein bL31B (87 aa).

The protein belongs to the bacterial ribosomal protein bL31 family. Type B subfamily. Part of the 50S ribosomal subunit.

The polypeptide is Large ribosomal subunit protein bL31B (Burkholderia pseudomallei (strain 1106a)).